A 314-amino-acid chain; its full sequence is Methionyl-tRNA formyltransferase (314 aa).

112 to 115 (SLLP) is a (6S)-5,6,7,8-tetrahydrofolate binding site.

Belongs to the Fmt family.

It catalyses the reaction L-methionyl-tRNA(fMet) + (6R)-10-formyltetrahydrofolate = N-formyl-L-methionyl-tRNA(fMet) + (6S)-5,6,7,8-tetrahydrofolate + H(+). Functionally, attaches a formyl group to the free amino group of methionyl-tRNA(fMet). The formyl group appears to play a dual role in the initiator identity of N-formylmethionyl-tRNA by promoting its recognition by IF2 and preventing the misappropriation of this tRNA by the elongation apparatus. The polypeptide is Methionyl-tRNA formyltransferase (Buchnera aphidicola subsp. Schizaphis graminum (strain Sg)).